We begin with the raw amino-acid sequence, 262 residues long: tRNA pseudouridine synthase A 2 (262 aa).

Asp66 (nucleophile) is an active-site residue. Residue Tyr125 coordinates substrate.

The protein belongs to the tRNA pseudouridine synthase TruA family. Homodimer.

The catalysed reaction is uridine(38/39/40) in tRNA = pseudouridine(38/39/40) in tRNA. Formation of pseudouridine at positions 38, 39 and 40 in the anticodon stem and loop of transfer RNAs. This chain is tRNA pseudouridine synthase A 2, found in Protochlamydia amoebophila (strain UWE25).